A 623-amino-acid chain; its full sequence is Putative pentatricopeptide repeat-containing protein At3g11460, mitochondrial (623 aa).

Residues 1 to 35 (MIVVTSFVRNSAVAAVASTPWNVRLRELAYQSLFS) constitute a mitochondrion transit peptide. PPR repeat units lie at residues 17–51 (ASTPWNVRLRELAYQSLFSESISLYRSMLRSGSSP), 52–86 (DAFSFPFILKSCASLSLPVSGQQLHCHVTKGGCET), 87–117 (EPFVLTALISMYCKCGLVADARKVFEENPQS), 120–154 (LSVCYNALISGYTANSKVTDAAYMFRRMKETGVSV), 155–189 (DSVTMLGLVPLCTVPEYLWLGRSLHGQCVKGGLDS), 190–220 (EVAVLNSFITMYMKCGSVEAGRRLFDEMPVK), 221–255 (GLITWNAVISGYSQNGLAYDVLELYEQMKSSGVCP), 256–290 (DPFTLVSVLSSCAHLGAKKIGHEVGKLVESNGFVP), 291–321 (NVFVSNASISMYARCGNLAKARAVFDIMPVK), 322–356 (SLVSWTAMIGCYGMHGMGEIGLMLFDDMIKRGIRP), 357–387 (DGAVFVMVLSACSHSGLTDKGLELFRAMKRE), and 393–423 (GPEHYSCLVDLLGRAGRLDEAMEFIESMPVE). The type E motif stretch occupies residues 428–503 (VWGALLGACK…KPGYSYVEHK (76 aa)). The tract at residues 504–535 (GRVHLFLAGDRSHEQTEEVHRMLDELETSVME) is type E(+) motif. Residues 536 to 623 (LAGNMDCDRG…DGVCSCKDYW (88 aa)) form a type DYW motif region.

Belongs to the PPR family. PCMP-H subfamily. As to quaternary structure, interacts with MORF8/RIP1.

It localises to the mitochondrion. Involved in C-to-U editing of mitochondrial RNA. Required specifically for editing the mitochondrial NAD2 transcript. This is Putative pentatricopeptide repeat-containing protein At3g11460, mitochondrial (PCMP-H52) from Arabidopsis thaliana (Mouse-ear cress).